Here is a 358-residue protein sequence, read N- to C-terminus: Myb family transcription factor APL (358 aa).

In terms of domain architecture, HTH myb-type spans 31–91; sequence TDPKPRLRWT…HLQKFRLGKQ (61 aa). The H-T-H motif DNA-binding region spans 62–87; sequence PKTIMRVMGVKGLTLYHLKSHLQKFR. Positions 125 to 145 form a coiled coil; that stretch reads RNMNEMQMEVQRRLHEQLEVQ. The LHEQLE signature appears at 138-143; that stretch reads LHEQLE. Residues 313–358 form a disordered region; that stretch reads RKSGLSGDEGNNGGKLLERPSPRRSPLSPMMNPNGGLIQGRNSPFG.

The protein belongs to the MYB-CC family. Expressed in shoots and roots, specifically in the developing protophloem sieve elements. Detected in phloem and/or cambium. Expressed in the phloem tissues of various organs, including leaves and cotyledons, during vegetative growth.

The protein resides in the nucleus. Functionally, transcription factor required for phloem identity. Has a dual role both in promoting phloem differentiation and in repressing xylem differentiation during vascular development. Regulates the expression of the transcription factor NAC045 (AC A4VCM0). May activate the transcription of specific genes involved in phosphate uptake or assimilation. Promotes flowering through transcriptional activation of both FT and its transport machinery component, FTIP1. This Arabidopsis thaliana (Mouse-ear cress) protein is Myb family transcription factor APL.